We begin with the raw amino-acid sequence, 82 residues long: Small ribosomal subunit protein uS17 (82 aa).

It belongs to the universal ribosomal protein uS17 family. In terms of assembly, part of the 30S ribosomal subunit.

One of the primary rRNA binding proteins, it binds specifically to the 5'-end of 16S ribosomal RNA. The chain is Small ribosomal subunit protein uS17 from Paracoccus denitrificans (strain Pd 1222).